We begin with the raw amino-acid sequence, 233 residues long: H-2 class II histocompatibility antigen, A-S alpha chain (233 aa).

Residues 1–88 form an alpha-1 region; it reads EDDIEADHVG…KRSNSTPATN (88 aa). Topologically, residues 1–195 are extracellular; it reads EDDIEADHVG…IPAPMSELTE (195 aa). Positions 89-182 are alpha-2; that stretch reads EAPQATVFPK…GLEEPVLKHW (94 aa). The 93-residue stretch at 91-183 folds into the Ig-like C1-type domain; it reads PQATVFPKSP…LEEPVLKHWE (93 aa). A disulfide bond links Cys111 and Cys167. The N-linked (GlcNAc...) asparagine glycan is linked to Asn122. Residues 183 to 195 form a connecting peptide region; that stretch reads EPEIPAPMSELTE. Residues 196–221 form a helical membrane-spanning segment; it reads TVVCALGLSVGLVGIVVGTIFIIQGL. Residues 222–233 are Cytoplasmic-facing; that stretch reads RSGGTSRHPGPL.

The protein belongs to the MHC class II family.

The protein resides in the membrane. This chain is H-2 class II histocompatibility antigen, A-S alpha chain (H2-Aa), found in Mus musculus (Mouse).